The sequence spans 70 residues: Large ribosomal subunit protein bL31 (70 aa).

Zn(2+) contacts are provided by Cys-16, Cys-18, Cys-37, and Cys-40.

This sequence belongs to the bacterial ribosomal protein bL31 family. Type A subfamily. In terms of assembly, part of the 50S ribosomal subunit. Zn(2+) is required as a cofactor.

Its function is as follows. Binds the 23S rRNA. The protein is Large ribosomal subunit protein bL31 of Histophilus somni (strain 2336) (Haemophilus somnus).